We begin with the raw amino-acid sequence, 127 residues long: Aspartate 1-decarboxylase (127 aa).

Catalysis depends on Ser25, which acts as the Schiff-base intermediate with substrate; via pyruvic acid. Ser25 bears the Pyruvic acid (Ser) mark. Thr57 contributes to the substrate binding site. Catalysis depends on Tyr58, which acts as the Proton donor. Position 73–75 (73–75 (GAA)) interacts with substrate.

Belongs to the PanD family. In terms of assembly, heterooctamer of four alpha and four beta subunits. Pyruvate is required as a cofactor. Is synthesized initially as an inactive proenzyme, which is activated by self-cleavage at a specific serine bond to produce a beta-subunit with a hydroxyl group at its C-terminus and an alpha-subunit with a pyruvoyl group at its N-terminus.

It is found in the cytoplasm. The enzyme catalyses L-aspartate + H(+) = beta-alanine + CO2. Its pathway is cofactor biosynthesis; (R)-pantothenate biosynthesis; beta-alanine from L-aspartate: step 1/1. In terms of biological role, catalyzes the pyruvoyl-dependent decarboxylation of aspartate to produce beta-alanine. This chain is Aspartate 1-decarboxylase, found in Neisseria gonorrhoeae (strain ATCC 700825 / FA 1090).